The chain runs to 897 residues: 3'-5' exonuclease DinG (897 aa).

Residues 8–161 (VVDLETTGNQ…DEDAATTAKL (154 aa)) enclose the Exonuclease domain. In terms of domain architecture, Helicase ATP-binding spans 241–496 (SKAVDQLGLT…KAIDQLEKQR (256 aa)). Position 276 to 283 (276 to 283 (ASLGSGKS)) interacts with ATP. Residues 448–451 (DEAH) carry the DEAH box motif. One can recognise a Helicase C-terminal domain in the interval 703-893 (NIDEYVASIV…QFGKLLRQIQ (191 aa)).

The protein belongs to the helicase family. DinG subfamily. Type 2 sub-subfamily.

Its function is as follows. 3'-5' exonuclease. The polypeptide is 3'-5' exonuclease DinG (Staphylococcus aureus (strain USA300)).